The primary structure comprises 469 residues: Protein apterous (469 aa).

Disordered stretches follow at residues 21–44 and 111–141; these read GPGA…CGSA and EVSD…DSKI. LIM zinc-binding domains are found at residues 148–200 and 210–263; these read CSGC…CKND and CSRC…CRTH. The homeobox DNA-binding region spans 367 to 426; that stretch reads TKRMRTSFKHHQLRTMKSYFAINHNPDAKDLKQLSQKTGLPKRVLQVWFQNARAKWRRMM.

As to expression, expressed in PNS and CNS.

It is found in the nucleus. In terms of biological role, required for the normal development of the wing and halter imaginal disks. In Drosophila melanogaster (Fruit fly), this protein is Protein apterous (ap).